We begin with the raw amino-acid sequence, 216 residues long: Cytochrome c-type protein Cgr1 (216 aa).

A helical transmembrane segment spans residues 18 to 38; it reads WPIVVGVVVVVLIAAGAGFWV. Residues Cys46, Cys50, His51, Cys95, Cys98, His99, Cys142, Cys147, His148, Cys176, Cys179, His180, Cys190, Cys193, and His194 each contribute to the heme site.

Belongs to the multiheme cytochrome c family. May form a membrane-associated complex with Cgr2. Post-translationally, binds 5 heme groups per subunit.

It is found in the cell membrane. Functionally, probably transfers electrons from a membrane-associated electron donor (e.g. the membrane quinone pool) to the [4Fe-4S] cluster of the Cgr2 reductase via its covalently bound heme groups. This Eggerthella lenta (strain ATCC 25559 / DSM 2243 / CCUG 17323 / JCM 9979 / KCTC 3265 / NCTC 11813 / VPI 0255 / 1899 B) (Eubacterium lentum) protein is Cytochrome c-type protein Cgr1.